Consider the following 242-residue polypeptide: Glutamate transport ATP-binding protein GluA (242 aa).

The ABC transporter domain occupies 2-236 (IKMTGVQKYF…PKSDRAKDFL (235 aa)). 34–41 (GPSGSGKS) contacts ATP.

Belongs to the ABC transporter superfamily. In terms of assembly, the complex is composed of two ATP-binding proteins (GluA), two transmembrane proteins (GluC and GluD) and a solute-binding protein (GluB).

The protein localises to the cell membrane. It carries out the reaction a polar amino acid(out) + ATP + H2O = a polar amino acid(in) + ADP + phosphate + H(+). It catalyses the reaction L-glutamate(out) + ATP + H2O = L-glutamate(in) + ADP + phosphate + H(+). Part of the ABC transporter complex GluABCD involved in glutamate uptake. Probably responsible for energy coupling to the transport system. The protein is Glutamate transport ATP-binding protein GluA of Corynebacterium glutamicum (strain ATCC 13032 / DSM 20300 / JCM 1318 / BCRC 11384 / CCUG 27702 / LMG 3730 / NBRC 12168 / NCIMB 10025 / NRRL B-2784 / 534).